A 120-amino-acid chain; its full sequence is Large ribosomal subunit protein uL18 (120 aa).

This sequence belongs to the universal ribosomal protein uL18 family. Part of the 50S ribosomal subunit; part of the 5S rRNA/L5/L18/L25 subcomplex. Contacts the 5S and 23S rRNAs.

Functionally, this is one of the proteins that bind and probably mediate the attachment of the 5S RNA into the large ribosomal subunit, where it forms part of the central protuberance. This is Large ribosomal subunit protein uL18 from Rhodospirillum rubrum (strain ATCC 11170 / ATH 1.1.1 / DSM 467 / LMG 4362 / NCIMB 8255 / S1).